Here is a 374-residue protein sequence, read N- to C-terminus: DNA replication and repair protein RecF (374 aa).

Residue 30–37 (GHNAQGKT) coordinates ATP.

Belongs to the RecF family.

It localises to the cytoplasm. Its function is as follows. The RecF protein is involved in DNA metabolism; it is required for DNA replication and normal SOS inducibility. RecF binds preferentially to single-stranded, linear DNA. It also seems to bind ATP. The protein is DNA replication and repair protein RecF of Limosilactobacillus reuteri (strain DSM 20016) (Lactobacillus reuteri).